The primary structure comprises 521 residues: Aspartic proteinase yapsin-1 (521 aa).

Positions 1–17 are cleaved as a signal peptide; that stretch reads MRIWILIFFSFIKLVSS. At 18-500 the chain is on the extracellular side; the sequence is LQYTGNGVLA…NAVANAGNSF (483 aa). One can recognise a Peptidase A1 domain in the interval 67 to 409; it reads YTTTLSIGRP…HQSQKMIAIG (343 aa). Residue Asp-85 is part of the active site. Residues Asn-136, Asn-157, Asn-250, Asn-289, Asn-295, Asn-354, Asn-414, Asn-418, Asn-460, and Asn-484 are each glycosylated (N-linked (GlcNAc...) asparagine). Residues 501-521 traverse the membrane as a helical segment; sequence SPLSAMVIMMMSAVFLGLGII.

This sequence belongs to the peptidase A1 family.

The protein resides in the endoplasmic reticulum membrane. It is found in the secreted. Its subcellular location is the cell wall. Its function is as follows. Cleaves at paired basic residues. The chain is Aspartic proteinase yapsin-1 (yps1) from Schizosaccharomyces pombe (strain 972 / ATCC 24843) (Fission yeast).